Consider the following 203-residue polypeptide: Endo-type membrane-bound lytic murein transglycosylase A (203 aa).

A signal peptide spans 1-15 (MKLRWFAFLVVLLAG). Cysteine 16 carries the N-palmitoyl cysteine lipid modification. Residue cysteine 16 is the site of S-diacylglycerol cysteine attachment.

This sequence belongs to the transglycosylase Slt family.

The protein localises to the cell outer membrane. It catalyses the reaction Endolytic cleavage of the (1-&gt;4)-beta-glycosidic linkage between N-acetylmuramic acid (MurNAc) and N-acetylglucosamine (GlcNAc) residues in peptidoglycan with concomitant formation of a 1,6-anhydrobond in the MurNAc residue.. Its function is as follows. Murein-degrading enzyme. May play a role in recycling of muropeptides during cell elongation and/or cell division. Preferentially cleaves at a distance of more than two disaccharide units from the ends of the glycan chain. The chain is Endo-type membrane-bound lytic murein transglycosylase A from Escherichia fergusonii (strain ATCC 35469 / DSM 13698 / CCUG 18766 / IAM 14443 / JCM 21226 / LMG 7866 / NBRC 102419 / NCTC 12128 / CDC 0568-73).